The primary structure comprises 473 residues: DNA-binding protein (473 aa).

2 disordered regions span residues 1-69 (MAGR…GFSH) and 85-111 (RRLE…SKAV). A compositionally biased stretch (polar residues) spans 7 to 18 (ELPTITPYLQET). Residues 53-62 (PDSEEEEEEV) show a composition bias toward acidic residues. Residue tyrosine 141 is modified to Phosphotyrosine; by host. 2 residues coordinate Zn(2+): cysteine 230 and histidine 232. A flexible loop region spans residues 243–277 (VEMDVASENAQRALKEHPSRAKVVQNRWGRSVVQL). Positions 285, 301, 342, 344, 396, and 412 each coordinate Zn(2+). The interval 459 to 473 (VALPASHGDGEKEPF) is C-terminal arm, DBP binding.

This sequence belongs to the adenoviridae E2A DNA-binding protein family. As to quaternary structure, homomultimerizes on viral ssDNA bound to pTP. Forms a initiation complex with viral polymerase, pTP and hosts NFIA and POU2F1/OCT1. Interacts with host SRCAP.

Its subcellular location is the host nucleus. Functionally, plays a role in the elongation phase of viral strand displacement replication by unwinding the template in an ATP-independent fashion, employing its capacity to form multimers. Also enhances the rate of initiation. Released from template upon second strand synthesis. Assembles in complex with viral pTP, viral pol, host NFIA and host POU2F1/OCT1 on viral origin of replication. Covers the whole ssDNA genome during synthesis. The complementary strand synthesis induces its relese from DNA template. May inhibit cellular transcription mediated by the interaction between host SRCAP and CBP. This chain is DNA-binding protein, found in Homo sapiens (Human).